The following is a 302-amino-acid chain: MDDYLKIEKIGEGTYGVVYKGRNKTTGQVVAMKKIRLESEEEGVPSTAVREISLLKELQHPNVVRLLDVLMQESKLYLVFEFLSMDLKKYLDSIPSGQFMDPMLVKSYLYQILEGILFCHCRRVLHRDLKPQNLLIDNKGVIKLADFGLARAFGVPVRVYTHEVVTLWYRAPEVLLGASRYSTPVDVWSIGTIFAELATKKPLFHGDSEIDQLFRIFRTLGTPNNEVWPDVESLPDYKNTFPKWKSGNLASTVKNLDKNGIDLLTKMLIYDPPKRISARQAMTHPYFDDLDKSTLPASNLKI.

Residues Tyr-4–Phe-287 form the Protein kinase domain. ATP contacts are provided by residues Ile-10–Val-18 and Lys-33. Thr-14 is subject to Phosphothreonine. The residue at position 15 (Tyr-15) is a Phosphotyrosine; by wee1 and wee2. Asp-128 acts as the Proton acceptor in catalysis. Thr-161 bears the Phosphothreonine; by cak mark.

Belongs to the protein kinase superfamily. CMGC Ser/Thr protein kinase family. CDC2/CDKX subfamily. As to quaternary structure, forms a stable but non-covalent complex with cyclin B in mature oocytes. Phosphorylation at Tyr-15 by wee1 and wee2 inhibits the protein kinase activity and acts negative regulator of entry into mitosis (G2 to M transition).

It localises to the nucleus. It is found in the cytoplasm. Its subcellular location is the cytoskeleton. The protein localises to the microtubule organizing center. The protein resides in the centrosome. The catalysed reaction is L-seryl-[protein] + ATP = O-phospho-L-seryl-[protein] + ADP + H(+). It catalyses the reaction L-threonyl-[protein] + ATP = O-phospho-L-threonyl-[protein] + ADP + H(+). It carries out the reaction [DNA-directed RNA polymerase] + ATP = phospho-[DNA-directed RNA polymerase] + ADP + H(+). With respect to regulation, phosphorylation at Thr-14 or Tyr-15 inactivates the enzyme, while phosphorylation at Thr-161 activates it. Plays a key role in the control of the eukaryotic cell cycle by modulating the centrosome cycle as well as mitotic onset; promotes G2-M transition via association with multiple interphase cyclins. During G2 and early mitosis, CDC25A/B/C-mediated dephosphorylation activates CDK1/cyclin complexes which phosphorylate several substrates that trigger at least centrosome separation, Golgi dynamics, nuclear envelope breakdown and chromosome condensation. Once chromosomes are condensed and aligned at the metaphase plate, CDK1 activity is switched off by WEE1- and PKMYT1-mediated phosphorylation to allow sister chromatid separation, chromosome decondensation, reformation of the nuclear envelope and cytokinesis. Catalyzes lamin (LMNA, LMNB1 and LMNB2) phosphorylation at the onset of mitosis, promoting nuclear envelope breakdown. In Carassius auratus (Goldfish), this protein is Cyclin-dependent kinase 1 (cdk1).